The following is a 414-amino-acid chain: Probable mannose-1-phosphate guanyltransferase (414 aa).

The protein belongs to the transferase hexapeptide repeat family.

It localises to the cytoplasm. The protein localises to the nucleus. It carries out the reaction alpha-D-mannose 1-phosphate + GTP + H(+) = GDP-alpha-D-mannose + diphosphate. It functions in the pathway nucleotide-sugar biosynthesis; GDP-alpha-D-mannose biosynthesis; GDP-alpha-D-mannose from alpha-D-mannose 1-phosphate (GTP route): step 1/1. Involved in cell wall synthesis where it is required for glycosylation. The sequence is that of Probable mannose-1-phosphate guanyltransferase from Schizosaccharomyces pombe (strain 972 / ATCC 24843) (Fission yeast).